The sequence spans 576 residues: Arginine--tRNA ligase (576 aa).

The 'HIGH' region motif lies at Ala-126–His-136.

The protein belongs to the class-I aminoacyl-tRNA synthetase family. Monomer.

The protein localises to the cytoplasm. It catalyses the reaction tRNA(Arg) + L-arginine + ATP = L-arginyl-tRNA(Arg) + AMP + diphosphate. The polypeptide is Arginine--tRNA ligase (argS) (Rickettsia prowazekii (strain Madrid E)).